The chain runs to 883 residues: uncharacterized protein (883 aa).

Residues 258 to 373 form a disordered region; that stretch reads INNQSDNQSN…NQFNKPDNEP (116 aa). Composition is skewed to low complexity over residues 259-268, 277-317, and 324-333; these read NNQSDNQSNS, EPNG…SNSE, and NEPNTEPNTE. The segment covering 334–347 has biased composition (polar residues); that stretch reads SNGQSNSELNNQSD. Positions 348-368 are enriched in low complexity; it reads NHPNNEPNSEPNNEPNNQFNK.

The protein belongs to the mimivirus L137 family.

This is an uncharacterized protein from Acanthamoeba polyphaga mimivirus (APMV).